Here is a 350-residue protein sequence, read N- to C-terminus: UDP-rhamnose/UDP-galactose transporter 3 (350 aa).

A run of 10 helical transmembrane segments spans residues 12 to 32, 41 to 61, 81 to 101, 104 to 124, 133 to 153, 160 to 180, 200 to 220, 224 to 244, 257 to 277, and 286 to 306; these read AVSD…IIMA, GFAF…TALV, LIWF…SLML, VGFY…MEWI, EVKI…VTDV, FICA…IGSL, AFSL…KFIM, MSSG…FCNI, SFQV…WLLF, and VAGM…MELE.

This sequence belongs to the TPT transporter family. TPT (TC 2.A.7.9) subfamily.

The protein localises to the golgi apparatus membrane. Functionally, nucleotide-sugar transporter that transports UDP-rhamnose or UDP-galactose and UMP in a strict counter-exchange mode. This is UDP-rhamnose/UDP-galactose transporter 3 from Arabidopsis thaliana (Mouse-ear cress).